An 834-amino-acid polypeptide reads, in one-letter code: Kinesin-like protein KIF18B (834 aa).

The 345-residue stretch at 9-353 (VVRVVVRVRP…LKYADRAKEI (345 aa)) folds into the Kinesin motor domain. 111–118 (GATGAGKT) is an ATP binding site. The stretch at 368–404 (ISQYATICQQLQAEVAFLREKLQMYEAGAQALQQQCS) forms a coiled coil. 4 disordered regions span residues 400–508 (QQQC…ADHS), 602–642 (LGAP…NLEM), 655–686 (RGSL…RVCP), and 800–834 (KKPN…TESY). Positions 411 to 432 (SIPQSLSSSSLQPGPSSQSSTL) are enriched in low complexity. T431 carries the post-translational modification Phosphothreonine. The span at 462-474 (EQEQCPQDKQCPT) shows a compositional bias: polar residues. S484 is modified (phosphoserine). Basic and acidic residues predominate over residues 611-620 (TSDKTFQKPT). A Nuclear localization signal motif is present at residues 619–627 (PTKEKKRKL). 2 positions are modified to phosphoserine: S634 and S657. T669 carries the post-translational modification Phosphothreonine. S814 bears the Phosphoserine mark.

The protein belongs to the TRAFAC class myosin-kinesin ATPase superfamily. Kinesin family. As to quaternary structure, interacts with MAPRE1; this interaction is required for efficient accumulation at microtubule plus ends. Interacts with KIF2C at microtubule tips; this interaction increases the affinity of both partners for microtubule plus ends and is required for robust microtubule depolymerization. KIF2C phosphorylation by AURKA or AURKB strongly reduces KIF18B-binding.

The protein localises to the nucleus. Its subcellular location is the cytoplasm. It localises to the cytoskeleton. Its function is as follows. In complex with KIF2C, constitutes the major microtubule plus-end depolymerizing activity in mitotic cells. Its major role may be to transport KIF2C and/or MAPRE1 along microtubules. This chain is Kinesin-like protein KIF18B (Kif18b), found in Mus musculus (Mouse).